The sequence spans 295 residues: Non-selective voltage-gated ion channel VDAC2 (295 aa).

ATP is bound by residues lysine 24 and lysine 32. Lysine 32 is modified (N6-acetyllysine; alternate). Residue lysine 32 is modified to N6-succinyllysine; alternate. A Glycyl lysine isopeptide (Lys-Gly) (interchain with G-Cter in ubiquitin); alternate cross-link involves residue lysine 32. A run of 2 beta stranded transmembrane segments spans residues 38–47 and 51–59; these read LVKLDVKTKS and VEFSTSGSS. A Glycyl lysine isopeptide (Lys-Gly) (interchain with G-Cter in ubiquitin) cross-link involves residue lysine 65. The beta stranded transmembrane segment at 66–76 threads the bilayer; it reads VSGTLETKYKW. Phosphotyrosine is present on tyrosine 79. Transmembrane regions (beta stranded) follow at residues 81–88, 92–101, and 107–116; these read LTFTEKWN, TLGTEIAIED, and LKLTFDTTFS. A Phosphothreonine modification is found at threonine 119. Lysine 121 is modified (N6-acetyllysine; alternate). Lysine 121 participates in a covalent cross-link: Glycyl lysine isopeptide (Lys-Gly) (interchain with G-Cter in ubiquitin); alternate. Lysine 122 is covalently cross-linked (Glycyl lysine isopeptide (Lys-Gly) (interchain with G-Cter in ubiquitin)). The next 4 membrane-spanning stretches (beta stranded) occupy residues 123–132, 135–142, 149–157, and 162–170; these read SGKIKSAYKR, INLGCDVD, AIHGSAVFG, and LAGYQMTFD. Lysine 173 is covalently cross-linked (Glycyl lysine isopeptide (Lys-Gly) (interchain with G-Cter in ubiquitin)). Beta stranded transmembrane passes span 175–187, 190–197, 201–210, 214–223, 230–239, and 243–250; these read KLTR…GYRT, FQLHTNVN, EFGGSIYQKV, FDTSVNLAWT, RFGIAAKYQL, and ASISAKVN. Tyrosine 237 is subject to Phosphotyrosine. Serine 252 carries the phosphoserine modification. NAD(+) contacts are provided by residues 254 to 256 and 272 to 276; these read LIG and SALVD. The next 2 membrane-spanning stretches (beta stranded) occupy residues 254–263 and 266–275; these read LIGVGYTQTL and GVKLTLSALV. Position 278 is an N6-acetyllysine; alternate (lysine 278). A Glycyl lysine isopeptide (Lys-Gly) (interchain with G-Cter in ubiquitin); alternate cross-link involves residue lysine 278. Residues 285–294 traverse the membrane as a beta stranded segment; that stretch reads HKLGLALELE.

This sequence belongs to the eukaryotic mitochondrial porin family. Monomer, homodimer and higher order oligomers; formation of higher order structures is necessary for scramblase activity. Interacts with ARMC12 in a TBC1D21-dependent manner. Interacts with KLC3. Interacts with SPATA33. Interacts with PPP3CC in a SPATA33-dependent manner. In terms of processing, ubiquitinated by PRKN during mitophagy, leading to its degradation and enhancement of mitophagy. Deubiquitinated by USP30. Highly expressed in heart, kidney, brain and ascitic tumor with very low levels in liver. Expressed in the head region of epididymal sperm.

It is found in the mitochondrion outer membrane. It localises to the membrane. It catalyses the reaction chloride(in) = chloride(out). The catalysed reaction is K(+)(in) = K(+)(out). The enzyme catalyses a 1,2-diacyl-sn-glycero-3-phospho-L-serine(in) = a 1,2-diacyl-sn-glycero-3-phospho-L-serine(out). It carries out the reaction a 1,2-diacyl-sn-glycero-3-phosphocholine(in) = a 1,2-diacyl-sn-glycero-3-phosphocholine(out). It catalyses the reaction a 1,2-diacyl-sn-glycero-3-phospho-(1D-myo-inositol)(in) = a 1,2-diacyl-sn-glycero-3-phospho-(1D-myo-inositol)(out). Non-selective voltage-gated ion channel that mediates the transport of anions and cations through the mitochondrion outer membrane and plasma membrane. The channel adopts an open conformation at zero mV and a closed conformation at both positive and negative potentials. There are two populations of channels; the main that functions in a lower open-state conductance with lower ion selectivity, that switch, in a voltage-dependent manner, from the open to a low-conducting 'closed' state and the other that has a normal ion selectivity in the typical high conductance, 'open' state. Binds various lipids, including the sphingolipid ceramide, the phospholipid phosphatidylcholine, and the sterols cholesterol and oxysterol. Binding of ceramide promotes the mitochondrial outer membrane permeabilization (MOMP) apoptotic pathway. Its function is as follows. Catalyzes the scrambling of phospholipids across the outer mitochondrial membrane; the mechanism is unrelated to channel activity and is capable of translocating both anionic and zwitterionic phospholipids. This Rattus norvegicus (Rat) protein is Non-selective voltage-gated ion channel VDAC2.